A 908-amino-acid polypeptide reads, in one-letter code: NADH-quinone oxidoreductase subunit G (908 aa).

Residues 2–83 enclose the 2Fe-2S ferredoxin-type domain; that stretch reads ATIHVDGKEY…GTFISIDDEE (82 aa). [2Fe-2S] cluster is bound by residues C34, C45, C48, and C67. Positions 83–122 constitute a 4Fe-4S His(Cys)3-ligated-type domain; sequence EAKQFRESVVEWLMTNHPHDCPVCEEGGNCHLQDMTVMTG. The [4Fe-4S] cluster site is built by H99, C103, C106, C112, C151, C154, C157, C201, C228, C231, C235, and C263. The 4Fe-4S Mo/W bis-MGD-type domain occupies 221–277; sequence MQFAPSICQQCSIGCNISPGERYGELRRIENRYNGTVNHYFLCDRGRFGYGYVNLKD.

Belongs to the complex I 75 kDa subunit family. Composed of 13 different subunits. Subunits NuoCD, E, F, and G constitute the peripheral sector of the complex. [2Fe-2S] cluster serves as cofactor. [4Fe-4S] cluster is required as a cofactor.

It carries out the reaction a quinone + NADH + 5 H(+)(in) = a quinol + NAD(+) + 4 H(+)(out). NDH-1 shuttles electrons from NADH, via FMN and iron-sulfur (Fe-S) centers, to quinones in the respiratory chain. The immediate electron acceptor for the enzyme in this species is believed to be ubiquinone. Couples the redox reaction to proton translocation (for every two electrons transferred, four hydrogen ions are translocated across the cytoplasmic membrane), and thus conserves the redox energy in a proton gradient. This is NADH-quinone oxidoreductase subunit G (nuoG) from Salmonella typhi.